A 206-amino-acid chain; its full sequence is Large ribosomal subunit protein uL4 (206 aa).

Residues 55–80 are disordered; the sequence is AFVSGGGAKPWRQKGTGRARSGSNRS.

This sequence belongs to the universal ribosomal protein uL4 family. In terms of assembly, part of the 50S ribosomal subunit.

In terms of biological role, one of the primary rRNA binding proteins, this protein initially binds near the 5'-end of the 23S rRNA. It is important during the early stages of 50S assembly. It makes multiple contacts with different domains of the 23S rRNA in the assembled 50S subunit and ribosome. Functionally, forms part of the polypeptide exit tunnel. The protein is Large ribosomal subunit protein uL4 of Nitratidesulfovibrio vulgaris (strain DSM 19637 / Miyazaki F) (Desulfovibrio vulgaris).